A 1102-amino-acid chain; its full sequence is Carbamoyl phosphate synthase large chain (1102 aa).

Residues 1-402 (MPKRTDLKSV…ALQKALRSLE (402 aa)) are carboxyphosphate synthetic domain. ATP is bound by residues Arg129, Arg169, Gly175, Gly176, Glu208, Ile210, Glu215, Gly241, Val242, His243, Gln285, and Glu299. Residues 133–328 (KGVVERCGAE…IAKIATKLSL (196 aa)) enclose the ATP-grasp 1 domain. Mg(2+) is bound by residues Gln285, Glu299, and Asn301. Mn(2+) contacts are provided by Gln285, Glu299, and Asn301. Residues 403–546 (QKGSQLDFSS…YHYSSYDEED (144 aa)) are oligomerization domain. Residues 547–950 (EVGLHAKPSV…AFAKSQAAAN (404 aa)) are carbamoyl phosphate synthetic domain. One can recognise an ATP-grasp 2 domain in the interval 677-868 (ARVLDEAGLT…MAKAAALIGT (192 aa)). Residues Arg713, Arg752, Leu754, Glu759, Gly784, Ile785, His786, Ser787, Gln827, and Glu839 each contribute to the ATP site. Mg(2+) contacts are provided by Gln827, Glu839, and Asn841. 3 residues coordinate Mn(2+): Gln827, Glu839, and Asn841. In terms of domain architecture, MGS-like spans 951–1096 (NALPTEGKIF…QEHAANLSAA (146 aa)). Residues 951 to 1102 (NALPTEGKIF…LSAAMEAANA (152 aa)) are allosteric domain.

Belongs to the CarB family. As to quaternary structure, composed of two chains; the small (or glutamine) chain promotes the hydrolysis of glutamine to ammonia, which is used by the large (or ammonia) chain to synthesize carbamoyl phosphate. Tetramer of heterodimers (alpha,beta)4. Requires Mg(2+) as cofactor. Mn(2+) is required as a cofactor.

The enzyme catalyses hydrogencarbonate + L-glutamine + 2 ATP + H2O = carbamoyl phosphate + L-glutamate + 2 ADP + phosphate + 2 H(+). It carries out the reaction hydrogencarbonate + NH4(+) + 2 ATP = carbamoyl phosphate + 2 ADP + phosphate + 2 H(+). It participates in amino-acid biosynthesis; L-arginine biosynthesis; carbamoyl phosphate from bicarbonate: step 1/1. Its pathway is pyrimidine metabolism; UMP biosynthesis via de novo pathway; (S)-dihydroorotate from bicarbonate: step 1/3. Its function is as follows. Large subunit of the glutamine-dependent carbamoyl phosphate synthetase (CPSase). CPSase catalyzes the formation of carbamoyl phosphate from the ammonia moiety of glutamine, carbonate, and phosphate donated by ATP, constituting the first step of 2 biosynthetic pathways, one leading to arginine and/or urea and the other to pyrimidine nucleotides. The large subunit (synthetase) binds the substrates ammonia (free or transferred from glutamine from the small subunit), hydrogencarbonate and ATP and carries out an ATP-coupled ligase reaction, activating hydrogencarbonate by forming carboxy phosphate which reacts with ammonia to form carbamoyl phosphate. The chain is Carbamoyl phosphate synthase large chain from Paenarthrobacter aurescens (strain TC1).